A 907-amino-acid polypeptide reads, in one-letter code: Protein translocase subunit SecA (907 aa).

ATP-binding positions include Gln87, 105 to 109, and Asp512; that span reads GEGKT. Positions 834 to 907 are disordered; it reads QEDVERMEEQ…KKYKQCHGKI (74 aa). 2 stretches are compositionally biased toward basic and acidic residues: residues 836 to 853 and 873 to 888; these read DVER…EAAR and EEAH…KVGR. Zn(2+)-binding residues include Cys892, Cys894, Cys903, and His904. A compositionally biased stretch (basic residues) spans 898–907; sequence KKYKQCHGKI.

The protein belongs to the SecA family. In terms of assembly, monomer and homodimer. Part of the essential Sec protein translocation apparatus which comprises SecA, SecYEG and auxiliary proteins SecDF-YajC and YidC. Requires Zn(2+) as cofactor.

The protein resides in the cell inner membrane. The protein localises to the cytoplasm. The catalysed reaction is ATP + H2O + cellular proteinSide 1 = ADP + phosphate + cellular proteinSide 2.. In terms of biological role, part of the Sec protein translocase complex. Interacts with the SecYEG preprotein conducting channel. Has a central role in coupling the hydrolysis of ATP to the transfer of proteins into and across the cell membrane, serving both as a receptor for the preprotein-SecB complex and as an ATP-driven molecular motor driving the stepwise translocation of polypeptide chains across the membrane. The chain is Protein translocase subunit SecA from Aliivibrio fischeri (strain MJ11) (Vibrio fischeri).